The following is a 333-amino-acid chain: Serine/threonine-protein phosphatase PP1-beta (333 aa).

Residues Asp-63, His-65, Asp-91, and Asn-123 each contribute to the Mn(2+) site. Catalysis depends on His-124, which acts as the Proton donor. Positions 172 and 247 each coordinate Mn(2+). A disordered region spans residues 306-333 (GAGGVGSNRPVTPPRNAPAAQPKKGAKK). Positions 322–333 (APAAQPKKGAKK) are enriched in low complexity.

It belongs to the PPP phosphatase family. PP-1 subfamily. In terms of assembly, interacts with lab-1; the interaction is direct. Interacts with knl-1; the interaction is direct. Mn(2+) is required as a cofactor. As to expression, expressed in gonads, nervous system, intestine and muscles.

The protein resides in the cytoplasm. The protein localises to the nucleus. The enzyme catalyses O-phospho-L-seryl-[protein] + H2O = L-seryl-[protein] + phosphate. The catalysed reaction is O-phospho-L-threonyl-[protein] + H2O = L-threonyl-[protein] + phosphate. With respect to regulation, inhibited by okadaic acid. Its function is as follows. Serine/threonine-protein phosphatase essential for chromosomal dynamics during meiosis and mitosis. During meiosis, promotes chromosomal cohesion and germline immortality via a small RNA-mediated genome silencing pathway. Antagonizes the function of air-2 kinase during meiosis I and mitosis to promote chromatid cohesion and spindle attachment. Dephosphorylates histone H3 at 'Ser-10'. Dephosphorylates histone H3 at 'Thr-3'. Also involved in the activation of chloride channel clh-3 during cell swelling and meiotic maturation. Promotes small RNA-mediated genome silencing over multiple generations. Essential for embryogenesis. This is Serine/threonine-protein phosphatase PP1-beta from Caenorhabditis elegans.